We begin with the raw amino-acid sequence, 456 residues long: Exodeoxyribonuclease 7 large subunit (456 aa).

It belongs to the XseA family. Heterooligomer composed of large and small subunits.

It is found in the cytoplasm. It catalyses the reaction Exonucleolytic cleavage in either 5'- to 3'- or 3'- to 5'-direction to yield nucleoside 5'-phosphates.. Functionally, bidirectionally degrades single-stranded DNA into large acid-insoluble oligonucleotides, which are then degraded further into small acid-soluble oligonucleotides. In Shigella boydii serotype 18 (strain CDC 3083-94 / BS512), this protein is Exodeoxyribonuclease 7 large subunit.